The chain runs to 432 residues: Glutamate-1-semialdehyde 2,1-aminomutase (432 aa).

Position 270 is an N6-(pyridoxal phosphate)lysine (K270).

It belongs to the class-III pyridoxal-phosphate-dependent aminotransferase family. HemL subfamily. Homodimer. Requires pyridoxal 5'-phosphate as cofactor.

It is found in the cytoplasm. It catalyses the reaction (S)-4-amino-5-oxopentanoate = 5-aminolevulinate. It participates in porphyrin-containing compound metabolism; protoporphyrin-IX biosynthesis; 5-aminolevulinate from L-glutamyl-tRNA(Glu): step 2/2. The chain is Glutamate-1-semialdehyde 2,1-aminomutase from Acinetobacter baumannii (strain ACICU).